The sequence spans 358 residues: Alanine racemase (358 aa).

The Proton acceptor; specific for D-alanine role is filled by K34. N6-(pyridoxal phosphate)lysine is present on K34. Substrate is bound at residue R130. Y254 functions as the Proton acceptor; specific for L-alanine in the catalytic mechanism. M302 provides a ligand contact to substrate.

This sequence belongs to the alanine racemase family. Pyridoxal 5'-phosphate is required as a cofactor.

It catalyses the reaction L-alanine = D-alanine. The protein operates within amino-acid biosynthesis; D-alanine biosynthesis; D-alanine from L-alanine: step 1/1. Functionally, catalyzes the interconversion of L-alanine and D-alanine. May also act on other amino acids. This is Alanine racemase (alr) from Actinobacillus succinogenes (strain ATCC 55618 / DSM 22257 / CCUG 43843 / 130Z).